The chain runs to 683 residues: Cysteine-rich receptor-like protein kinase 28 (683 aa).

Positions 1–24 (MEHVRVIFFFFACVLKIVPFICLA) are cleaved as a signal peptide. The Extracellular segment spans residues 25 to 288 (QKDKYEFPPG…RTGKGKGGSK (264 aa)). Gnk2-homologous domains lie at 32 to 136 (PPGF…NMII) and 142 to 251 (TTPT…TWRF). Asn43, Asn47, Asn73, and Asn153 each carry an N-linked (GlcNAc...) asparagine glycan. The interval 263 to 283 (PAIQPADSPTSAARTERTGKG) is disordered. Residues 289–309 (VIVAIVIPIVFVALFAICLCL) form a helical membrane-spanning segment. Residues 310 to 683 (LLKWKKNKSV…DVTVSELSPR (374 aa)) are Cytoplasmic-facing. One can recognise a Protein kinase domain in the interval 361 to 641 (FSPENELGRG…ALMLNSYSYT (281 aa)). ATP contacts are provided by residues 367 to 375 (LGRGGFGSV) and Lys389. Tyr434 carries the phosphotyrosine modification. Residue Asp486 is the Proton acceptor of the active site. Position 490 is a phosphoserine (Ser490). Thr528 carries the post-translational modification Phosphothreonine. Tyr536 carries the post-translational modification Phosphotyrosine.

Belongs to the protein kinase superfamily. Ser/Thr protein kinase family. CRK subfamily.

The protein localises to the membrane. It catalyses the reaction L-seryl-[protein] + ATP = O-phospho-L-seryl-[protein] + ADP + H(+). The catalysed reaction is L-threonyl-[protein] + ATP = O-phospho-L-threonyl-[protein] + ADP + H(+). The chain is Cysteine-rich receptor-like protein kinase 28 (CRK28) from Arabidopsis thaliana (Mouse-ear cress).